Here is a 273-residue protein sequence, read N- to C-terminus: DnaJ homolog subfamily C member 27 (273 aa).

GTP contacts are provided by residues 23–30, 71–75, and 134–137; these read GNAEVGKS, DMAGH, and NKID. The J domain maps to 217–273; that stretch reads DSWDMLGVKPGATRDEVNKAYRKLAVLLHPDKCVAPGSEDAFKAVVNARTALLKNIK.

This sequence belongs to the small GTPase superfamily. Rab family.

The protein resides in the nucleus. Its function is as follows. GTPase possibly involved in regulation of the MEK/ERK pathway. The protein is DnaJ homolog subfamily C member 27 (DNAJC27) of Gallus gallus (Chicken).